The primary structure comprises 242 residues: uncharacterized protein (242 aa).

Residues 57–67 (SPTSQKTSASG) show a composition bias toward polar residues. The tract at residues 57-78 (SPTSQKTSASGQEEPDPLHDKS) is disordered. Positions 76 to 188 (DKSSGLIQRF…GYMSTPPPVK (113 aa)) constitute a DUF1279 domain. A helical transmembrane segment spans residues 92–114 (YGKVMIPVHLLTSTMWFGTFYYA). Residues 188 to 237 (KEYLQEKMEETKERISGKMEETKDRFSERMEETKDKFNEKLQETKDKVSF) are a coiled coil. Residues 198–236 (TKERISGKMEETKDRFSERMEETKDKFNEKLQETKDKVS) show a composition bias toward basic and acidic residues. The tract at residues 198 to 242 (TKERISGKMEETKDRFSERMEETKDKFNEKLQETKDKVSFRKKKE) is disordered.

It localises to the membrane. This is an uncharacterized protein from Danio rerio (Zebrafish).